Here is a 957-residue protein sequence, read N- to C-terminus: MTQTLSQLENRDAFIERHIGPDAQQQQEMLKTVGADSLNALIGQIVPQDIQLATPPQVGDATTEFAALAELKAIAGRNKRFKSYIGMGYTAVQLPPVIQRNMLENPGWYTAYTPYQPEVSQGRLESLLNFQQVTLDLTGLDIASASLLDEATAAAEAMAMAKRVSKLKNANRFFVAADVHPQTLDVVRTRAETFGFDVIVDDADKVLDHQDVFGVLLQQVGTTGEIHDYSKLIAELKARKVIVSVAADFMALVLLTAPGKQGADIVFGSAQRFGVPMGYGGPHAAFFAAKDEFKRSMPGRIIGVSKDAAGNTALRMAMQTREQHIRREKANSNICTSQVLLANIASLYAVFHGPAGLKRIAGRIHRLTDILADGLQKKGLKLRHAHYFDTLCVEVADKAAVLARAEALQINLRSDIHGAVGITLDEATTREDVLNLFRAIVGDDHGLDIDTLDKDVALDSRSIPAAMLRDDAILTHPVFNRYHSETEMMRYMHALERKDLALNQAMIPLGSCTMKLNAAAEMIPITWPEFAELHPFCPVEQAEGYHQMIAQLSDWLVKLTGYDAVCMQPNSGAQGEYAGLLAIRHYHESRNEGHRDICLIPSSAHGTNPASAQMAGMQVVVVACDKNGNIDLADLREKAEQAGANLSCIMVTYPSTHGVYEETIREVCEIVHQFGGQVYLDGANMNAQVGITSPGFIGADVSHLNLHKTFCIPHGGGGPGMGPIGVKAHLAPFVPGHSVVQIEGMLTRQGAVSAAPFGSASILPISWMYIRMMGAEGLKQASQNAILNANYIATRLKEAYPVLYTGRDGRVAHECILDIRPLKEETGISELDIAKRLIDFGFHAPTMSFPVAGTLMVEPTESESKVELDRFIDAMLAIRAEIDRVKAGEWPLEDNPLVNAPHTQGELVSEWNHPYSRELAVFPAGLHNKYWPTVKRLDDVYGDRNLFCSCVPMSEYQ.

Lysine 708 is modified (N6-(pyridoxal phosphate)lysine).

The protein belongs to the GcvP family. As to quaternary structure, the glycine cleavage system is composed of four proteins: P, T, L and H. Pyridoxal 5'-phosphate serves as cofactor.

It catalyses the reaction N(6)-[(R)-lipoyl]-L-lysyl-[glycine-cleavage complex H protein] + glycine + H(+) = N(6)-[(R)-S(8)-aminomethyldihydrolipoyl]-L-lysyl-[glycine-cleavage complex H protein] + CO2. The glycine cleavage system catalyzes the degradation of glycine. The P protein binds the alpha-amino group of glycine through its pyridoxal phosphate cofactor; CO(2) is released and the remaining methylamine moiety is then transferred to the lipoamide cofactor of the H protein. The sequence is that of Glycine dehydrogenase (decarboxylating) from Klebsiella pneumoniae (strain 342).